We begin with the raw amino-acid sequence, 543 residues long: Proline--tRNA ligase, chloroplastic/mitochondrial (543 aa).

A disordered region spans residues 41-63 (ATAPSGTASPETKSSEVDRLRSD). The segment covering 53-63 (KSSEVDRLRSD) has biased composition (basic and acidic residues).

This sequence belongs to the class-II aminoacyl-tRNA synthetase family.

The protein localises to the plastid. It is found in the chloroplast. The protein resides in the mitochondrion. The catalysed reaction is tRNA(Pro) + L-proline + ATP = L-prolyl-tRNA(Pro) + AMP + diphosphate. Functionally, catalyzes the attachment of proline to tRNA(Pro) in a two-step reaction: proline is first activated by ATP to form Pro-AMP and then transferred to the acceptor end of tRNA(Pro). This chain is Proline--tRNA ligase, chloroplastic/mitochondrial, found in Arabidopsis thaliana (Mouse-ear cress).